We begin with the raw amino-acid sequence, 264 residues long: Chymotrypsin-like protease CTRL-1 (264 aa).

An N-terminal signal peptide occupies residues 1–18; that stretch reads MLLLSLTLSLVLLGSSWG. Positions 19–33 are cleaved as a propeptide — activation peptide; sequence CGIPAIKPALSFSQR. 5 disulfide bridges follow: cysteine 19-cysteine 141, cysteine 60-cysteine 76, cysteine 155-cysteine 220, cysteine 187-cysteine 201, and cysteine 210-cysteine 239. The Peptidase S1 domain maps to 34 to 262; sequence IVNGENAVLG…FSTWINQVIA (229 aa). Catalysis depends on histidine 75, which acts as the Charge relay system. Asparagine 114 carries an N-linked (GlcNAc...) asparagine glycan. The Charge relay system role is filled by aspartate 121. Serine 214 (charge relay system) is an active-site residue.

Belongs to the peptidase S1 family.

The protein is Chymotrypsin-like protease CTRL-1 (CTRL) of Homo sapiens (Human).